The following is a 486-amino-acid chain: Elastin-binding protein EbpS (486 aa).

Over residues 1 to 40 (MSNNFKDDFEKNRQSIDTNSHQDHTEDVEKDQSELEHQDT) the composition is skewed to basic and acidic residues. Positions 1–314 (MSNNFKDDFE…NHDRDKERKK (314 aa)) are disordered. Topologically, residues 2–204 (SNNFKDDFEK…EPKEHHNGKK (203 aa)) are extracellular. Residues 14–34 (QSIDTNSHQDHTEDVEKDQSE) are elastin-binding. The segment covering 64–85 (TNHNKQVHNESQTSEDNVQNEA) has biased composition (polar residues). Composition is skewed to basic and acidic residues over residues 103–118 (EPSH…EEYY) and 126–143 (DKSH…DTIK). A compositionally biased stretch (polar residues) spans 161–179 (EQSQQPKPYFTTGANQSET). Basic and acidic residues predominate over residues 180–199 (SKNEHDNDSVKQDQDEPKEH). Residues 204-225 (KAAAIGAGTAGVAGAAGAMAAS) show a composition bias toward low complexity. A helical transmembrane segment spans residues 205–225 (AAAIGAGTAGVAGAAGAMAAS). Residues 226 to 319 (KAKKHSNDAQ…KERKKGGMAK (94 aa)) are Cytoplasmic-facing. Residues 233 to 246 (DAQNKSNSGKANNS) show a composition bias toward polar residues. Residues 247-259 (TEDKASQDKSKDH) are compositionally biased toward basic and acidic residues. Over residues 278 to 297 (GAASKSASAASKPHASNNAS) the composition is skewed to low complexity. Basic and acidic residues predominate over residues 299-314 (NHDEHDNHDRDKERKK). A helical transmembrane segment spans residues 320-340 (VLLPLIAAVLIIGALAIFGGM). Residues 341–486 (ALNNHNNGTK…IRNGQQIVIP (146 aa)) are Extracellular-facing. Residues 351–440 (ENKIANTNKN…QRQGGGQRHT (90 aa)) form a disordered region. The span at 361 to 398 (NADESKDKDTSKDASKDKSKSTDSDKSKEDQDKATKDE) shows a compositional bias: basic and acidic residues. The segment covering 403-431 (QNNANQANNQAQNNQNQQQANQNQQQQQQ) has biased composition (low complexity). One can recognise a LysM domain in the interval 437–485 (QRHTVNGQENLYRIAIQYYGSGSPENVEKIRRANGLSGNNIRNGQQIVI).

It localises to the cell membrane. Promotes binding of soluble elastin peptides and tropoelastin to S.aureus cells although it is not able to promote bacterial adherence to immobilized elastin and, therefore, is not a microbial surface component recognizing adhesive matrix molecule (MSCRAMM). This is Elastin-binding protein EbpS (ebpS) from Staphylococcus aureus (strain USA300).